Consider the following 100-residue polypeptide: Small ribosomal subunit protein uS14c (100 aa).

This sequence belongs to the universal ribosomal protein uS14 family. As to quaternary structure, part of the 30S ribosomal subunit.

It localises to the plastid. The protein localises to the chloroplast. Binds 16S rRNA, required for the assembly of 30S particles. The sequence is that of Small ribosomal subunit protein uS14c from Buxus microphylla (Littleleaf boxwood).